The chain runs to 238 residues: Thymidine kinase a (238 aa).

ATP contacts are provided by residues 38 to 45, 70 to 72, and 115 to 118; these read GPMFSGKS, DTR, and DEAQ. Glu116 acts as the Proton acceptor in catalysis. Tyr147 lines the substrate pocket. Residues Cys172 and Cys175 each contribute to the Zn(2+) site. Substrate is bound by residues 191 to 195 and Tyr200; that span reads TELIG. Cys204 lines the Zn(2+) pocket.

This sequence belongs to the thymidine kinase family. Monomer and dimer. Dimerization is stimulated by ATP. Expressed ubiquitously.

The protein resides in the cytoplasm. It catalyses the reaction thymidine + ATP = dTMP + ADP + H(+). It functions in the pathway purine metabolism. It participates in pyrimidine metabolism. In terms of biological role, part of the salvage pathway for purine and pyrimidine deoxyribonucleotide synthesis. Phosphorylates preferentially purines over pyrimidines. Mediates tolerance to genotoxins, such as ultraviolet-C (UV-C) irradiation, MMC, a DNA crosslinker, and ZEO, a DNA intercalator, that induce double-strand breaks and thus contributes to several DNA repair pathways by providing deoxythymidine triphosphate that serve as precursors for DNA repair and to balance deoxyribonucleotides pools. The polypeptide is Thymidine kinase a (Arabidopsis thaliana (Mouse-ear cress)).